An 80-amino-acid chain; its full sequence is Defensin-like protein CAL1 (80 aa).

Residues 1–31 (MAPSRRMVASAFLLLAILVATEMGTTKVAEA) form the signal peptide. Cystine bridges form between C34–C80, C45–C65, C51–C74, and C55–C76.

Belongs to the DEFL family. In terms of tissue distribution, expressed preferentially in root exodermis and xylem parenchyma cells in vasculature of root and flag leaf sheath.

Its subcellular location is the secreted. The protein localises to the extracellular space. Functionally, plant defensin-like protein involved in accumulation of cadmium (Cd) in rice leaves. Mediates Cd efflux from cytosol into extracellular spaces via chelation. This drives Cd secretion from xylem parenchyma cells into the xylem vessels, hence lowering Cd levels in cytosol meanwhile promoting Cd translocation from roots to shoots. In Oryza sativa subsp. japonica (Rice), this protein is Defensin-like protein CAL1.